A 682-amino-acid chain; its full sequence is Probable methyltransferase PMT12 (682 aa).

The Cytoplasmic segment spans residues 1–11 (MKLFLNSNLLR). Residues 12–32 (NSIFFKISAFVLISVACFFLG) traverse the membrane as a helical; Signal-anchor for type II membrane protein segment. Residues 33 to 682 (KHWSEDGFRR…KRRKTKGKRA (650 aa)) lie on the Lumenal side of the membrane. N-linked (GlcNAc...) asparagine glycans are attached at residues Asn-67, Asn-103, Asn-125, Asn-155, Asn-173, Asn-193, Asn-273, Asn-350, Asn-395, Asn-419, Asn-600, and Asn-625.

Belongs to the methyltransferase superfamily.

It is found in the golgi apparatus membrane. This is Probable methyltransferase PMT12 from Arabidopsis thaliana (Mouse-ear cress).